Consider the following 201-residue polypeptide: Adenylyl-sulfate kinase (201 aa).

An ATP-binding site is contributed by 35-42 (GLSGSGKS). The active-site Phosphoserine intermediate is Ser-109.

The protein belongs to the APS kinase family.

The catalysed reaction is adenosine 5'-phosphosulfate + ATP = 3'-phosphoadenylyl sulfate + ADP + H(+). It participates in sulfur metabolism; hydrogen sulfide biosynthesis; sulfite from sulfate: step 2/3. Its function is as follows. Catalyzes the synthesis of activated sulfate. This chain is Adenylyl-sulfate kinase, found in Erwinia tasmaniensis (strain DSM 17950 / CFBP 7177 / CIP 109463 / NCPPB 4357 / Et1/99).